The primary structure comprises 194 residues: Crossover junction endodeoxyribonuclease RuvC (194 aa).

Residues Asp-7, Glu-68, and Asp-141 contribute to the active site. Mg(2+)-binding residues include Asp-7, Glu-68, and Asp-141.

This sequence belongs to the RuvC family. In terms of assembly, homodimer which binds Holliday junction (HJ) DNA. The HJ becomes 2-fold symmetrical on binding to RuvC with unstacked arms; it has a different conformation from HJ DNA in complex with RuvA. In the full resolvosome a probable DNA-RuvA(4)-RuvB(12)-RuvC(2) complex forms which resolves the HJ. The cofactor is Mg(2+).

The protein localises to the cytoplasm. The catalysed reaction is Endonucleolytic cleavage at a junction such as a reciprocal single-stranded crossover between two homologous DNA duplexes (Holliday junction).. In terms of biological role, the RuvA-RuvB-RuvC complex processes Holliday junction (HJ) DNA during genetic recombination and DNA repair. Endonuclease that resolves HJ intermediates. Cleaves cruciform DNA by making single-stranded nicks across the HJ at symmetrical positions within the homologous arms, yielding a 5'-phosphate and a 3'-hydroxyl group; requires a central core of homology in the junction. The consensus cleavage sequence is 5'-(A/T)TT(C/G)-3'. Cleavage occurs on the 3'-side of the TT dinucleotide at the point of strand exchange. HJ branch migration catalyzed by RuvA-RuvB allows RuvC to scan DNA until it finds its consensus sequence, where it cleaves and resolves the cruciform DNA. This chain is Crossover junction endodeoxyribonuclease RuvC, found in Mycolicibacterium vanbaalenii (strain DSM 7251 / JCM 13017 / BCRC 16820 / KCTC 9966 / NRRL B-24157 / PYR-1) (Mycobacterium vanbaalenii).